A 72-amino-acid polypeptide reads, in one-letter code: Large ribosomal subunit protein bL31 (72 aa).

Residues Cys-16, Cys-18, Cys-38, and Cys-41 each contribute to the Zn(2+) site.

It belongs to the bacterial ribosomal protein bL31 family. Type A subfamily. In terms of assembly, part of the 50S ribosomal subunit. The cofactor is Zn(2+).

Binds the 23S rRNA. This is Large ribosomal subunit protein bL31 from Aromatoleum aromaticum (strain DSM 19018 / LMG 30748 / EbN1) (Azoarcus sp. (strain EbN1)).